Reading from the N-terminus, the 145-residue chain is Major pollen allergen Ole e 1 (145 aa).

3 disulfides stabilise this stretch: Cys19-Cys90, Cys22-Cys131, and Cys43-Cys78. Asn111 carries an N-linked (GlcNAc...) (complex) asparagine; alternate glycan. A glycan (N-linked (GlcNAc...) (high mannose) asparagine; alternate) is linked at Asn111.

Belongs to the Ole e I family. In terms of processing, N-glycosylated; contains high mannose (Man(7)-GlcNAc) and partially fucosylated complex glycans (GlcNAc-Man(3)-Xyl-GlcNAc). Complex glycans may contribute to the antigenicity. Exists both in a glycosylated and in a non-glycosylated form. Ole e 1 and Ole e 1.0103 are the only non-glycosylated isoallergens. Post-translationally, a second potential glycosylation site exists at position 50 in cv. Bella de Espana and cv. Hojiblanca. As to expression, expressed in tapetum and pollen grains. Not detected in petals, roots or leaves.

It localises to the endoplasmic reticulum. It is found in the secreted. In terms of biological role, may be involved in recognition between pollen-stigma and pollen tube-style cells. This chain is Major pollen allergen Ole e 1, found in Olea europaea (Common olive).